The following is a 370-amino-acid chain: Heme A synthase (370 aa).

Transmembrane regions (helical) follow at residues 15–35 (VRIW…VGGA), 104–124 (VIGI…AIGP), 129–149 (ALWI…WMVA), 161–181 (VRLA…VWTL), 200–220 (ALAL…VAGL), 261–280 (QFDH…LHMI), 293–313 (GAVL…FTVL), and 317–337 (PIDL…LAVL). H264 lines the heme pocket. H324 provides a ligand contact to heme.

This sequence belongs to the COX15/CtaA family. Type 2 subfamily. In terms of assembly, interacts with CtaB. It depends on heme b as a cofactor.

Its subcellular location is the cell membrane. It carries out the reaction Fe(II)-heme o + 2 A + H2O = Fe(II)-heme a + 2 AH2. It participates in porphyrin-containing compound metabolism; heme A biosynthesis; heme A from heme O: step 1/1. In terms of biological role, catalyzes the conversion of heme O to heme A by two successive hydroxylations of the methyl group at C8. The first hydroxylation forms heme I, the second hydroxylation results in an unstable dihydroxymethyl group, which spontaneously dehydrates, resulting in the formyl group of heme A. This chain is Heme A synthase, found in Rhodopseudomonas palustris (strain TIE-1).